We begin with the raw amino-acid sequence, 329 residues long: uncharacterized protein (329 aa).

The segment at 1 to 20 (MGESTTQPAGGAAVDDETRS) is disordered.

This is an uncharacterized protein from Mycobacterium tuberculosis (strain CDC 1551 / Oshkosh).